The chain runs to 209 residues: Outer-membrane lipoprotein carrier protein (209 aa).

An N-terminal signal peptide occupies residues 1–21 (MHRQLRYAVLATALFASTAFA).

This sequence belongs to the LolA family. As to quaternary structure, monomer.

The protein resides in the periplasm. Participates in the translocation of lipoproteins from the inner membrane to the outer membrane. Only forms a complex with a lipoprotein if the residue after the N-terminal Cys is not an aspartate (The Asp acts as a targeting signal to indicate that the lipoprotein should stay in the inner membrane). In Xanthomonas oryzae pv. oryzae (strain MAFF 311018), this protein is Outer-membrane lipoprotein carrier protein.